Here is a 134-residue protein sequence, read N- to C-terminus: MARTKHTARKSFGGKAPRKSLATKAARKVFPVDGQVKKRYRPSSNALKEIRKYQKSTELLVRKLPFQRLVREVAQEIMPNVRFQSAAIQALHEAAEAYLIGLFEDTNLCAIHAKRVTIMPKDMQLARRIRGERG.

Residues 1–25 (MARTKHTARKSFGGKAPRKSLATKA) are disordered. N6-acetyllysine; alternate occurs at positions 5 and 10. N6-methylated lysine; alternate occurs at positions 5 and 10. Position 11 is a phosphoserine (Ser-11). N6-acetyllysine is present on residues Lys-15 and Lys-24. N6-methylated lysine occurs at positions 28 and 37.

The protein belongs to the histone H3 family. In terms of assembly, the nucleosome is a histone octamer containing two molecules each of H2A, H2B, H3 and H4 assembled in one H3-H4 heterotetramer and two H2A-H2B heterodimers. The octamer wraps approximately 147 bp of DNA. Post-translationally, acetylation is generally linked to gene activation. Methylation at Lys-5 is linked to gene activation. Methylation at Lys-10 is linked to gene repression.

The protein localises to the nucleus. It localises to the chromosome. Functionally, putative variant histone H3 which may replace conventional H3 in a subset of nucleosomes. Nucleosomes wrap and compact DNA into chromatin, limiting DNA accessibility to the cellular machineries which require DNA as a template. Histones thereby play a central role in transcription regulation, DNA repair, DNA replication and chromosomal stability. DNA accessibility is regulated via a complex set of post-translational modifications of histones, also called histone code, and nucleosome remodeling. The sequence is that of Histone H3.3-like type 1 (his-70) from Caenorhabditis elegans.